The following is a 630-amino-acid chain: DNA mismatch repair protein MutL (630 aa).

Residues 398–408 (TQTNAFGSMAT) show a composition bias toward polar residues. Residues 398–425 (TQTNAFGSMATSRDSSRGSYSASESRQR) are disordered.

This sequence belongs to the DNA mismatch repair MutL/HexB family.

Its function is as follows. This protein is involved in the repair of mismatches in DNA. It is required for dam-dependent methyl-directed DNA mismatch repair. May act as a 'molecular matchmaker', a protein that promotes the formation of a stable complex between two or more DNA-binding proteins in an ATP-dependent manner without itself being part of a final effector complex. This is DNA mismatch repair protein MutL from Shewanella baltica (strain OS185).